Consider the following 390-residue polypeptide: Putative RING-H2 finger protein ATL12 (390 aa).

Positions 1 to 22 (MNSPQEISILFFFIIFLDYVSA) are cleaved as a signal peptide. The helical transmembrane segment at 41 to 61 (LAIITGVFSIVFTLTFVLLVY) threads the bilayer. An RING-type; atypical zinc finger spans residues 124 to 166 (CSVCLSKFEDVEILRLLPKCRHAFHIGCIDQWLEQHATCPLCR).

Belongs to the RING-type zinc finger family. ATL subfamily.

Its subcellular location is the membrane. It carries out the reaction S-ubiquitinyl-[E2 ubiquitin-conjugating enzyme]-L-cysteine + [acceptor protein]-L-lysine = [E2 ubiquitin-conjugating enzyme]-L-cysteine + N(6)-ubiquitinyl-[acceptor protein]-L-lysine.. The protein operates within protein modification; protein ubiquitination. This chain is Putative RING-H2 finger protein ATL12 (ATL12), found in Arabidopsis thaliana (Mouse-ear cress).